The primary structure comprises 105 residues: Small ribosomal subunit protein uS10 (105 aa).

The protein belongs to the universal ribosomal protein uS10 family. As to quaternary structure, part of the 30S ribosomal subunit.

Functionally, involved in the binding of tRNA to the ribosomes. In Rickettsia massiliae (strain Mtu5), this protein is Small ribosomal subunit protein uS10.